The chain runs to 130 residues: Small ribosomal subunit protein uS8 (130 aa).

Belongs to the universal ribosomal protein uS8 family. As to quaternary structure, part of the 30S ribosomal subunit. Contacts proteins S5 and S12.

Its function is as follows. One of the primary rRNA binding proteins, it binds directly to 16S rRNA central domain where it helps coordinate assembly of the platform of the 30S subunit. The sequence is that of Small ribosomal subunit protein uS8 from Proteus mirabilis (strain HI4320).